The primary structure comprises 364 residues: Spermidine/putrescine import ATP-binding protein PotA (364 aa).

The ABC transporter domain maps to 6-236; it reads IEIRQIYKSY…PANLHVAMFI (231 aa). Position 38–45 (38–45) interacts with ATP; that stretch reads GPSGCGKT.

The protein belongs to the ABC transporter superfamily. Spermidine/putrescine importer (TC 3.A.1.11.1) family. The complex is composed of two ATP-binding proteins (PotA), two transmembrane proteins (PotB and PotC) and a solute-binding protein (PotD).

It localises to the cell inner membrane. It catalyses the reaction ATP + H2O + polyamine-[polyamine-binding protein]Side 1 = ADP + phosphate + polyamineSide 2 + [polyamine-binding protein]Side 1.. In terms of biological role, part of the ABC transporter complex PotABCD involved in spermidine/putrescine import. Responsible for energy coupling to the transport system. This is Spermidine/putrescine import ATP-binding protein PotA from Legionella pneumophila (strain Paris).